A 468-amino-acid chain; its full sequence is UDP-N-acetylmuramate--L-alanine ligase (468 aa).

114 to 120 serves as a coordination point for ATP; that stretch reads GTHGKTT.

The protein belongs to the MurCDEF family.

The protein resides in the cytoplasm. The catalysed reaction is UDP-N-acetyl-alpha-D-muramate + L-alanine + ATP = UDP-N-acetyl-alpha-D-muramoyl-L-alanine + ADP + phosphate + H(+). It participates in cell wall biogenesis; peptidoglycan biosynthesis. Its function is as follows. Cell wall formation. This chain is UDP-N-acetylmuramate--L-alanine ligase, found in Brucella anthropi (strain ATCC 49188 / DSM 6882 / CCUG 24695 / JCM 21032 / LMG 3331 / NBRC 15819 / NCTC 12168 / Alc 37) (Ochrobactrum anthropi).